A 46-amino-acid chain; its full sequence is Defensin-1 (46 aa).

Cystine bridges form between C3–C46, C14–C35, C20–C40, and C24–C42.

Belongs to the DEFL family. As to expression, epidermis and vascular bundles of pods, stems, roots, leaves and wet or dry seeds.

In terms of biological role, possesses antifungal activity sensitive to inorganic cations. The chain is Defensin-1 from Pisum sativum (Garden pea).